We begin with the raw amino-acid sequence, 1187 residues long: uncharacterized protein (1187 aa).

Over residues 38-57 (KNNQDIPTSNTNISPKPISQ) the composition is skewed to polar residues. 8 disordered regions span residues 38–127 (KNNQ…NSPT), 189–215 (ISRS…IHLN), 248–287 (TQPP…SQLQ), 358–415 (NNNS…NSNS), 443–490 (FPNN…INNN), 536–689 (QFPF…SSLN), 752–840 (SINN…NKSI), and 1079–1187 (HNNN…NLQK). Composition is skewed to low complexity over residues 71–84 (KPIV…STLI), 104–124 (PSSS…SIPN), 190–215 (SRSS…IHLN), and 248–274 (TQPP…QAPH). The segment covering 443-455 (FPNNTDENYPSDH) has biased composition (polar residues). 6 stretches are compositionally biased toward low complexity: residues 458 to 490 (NDNN…INNN), 543 to 570 (TTES…SSSA), 585 to 653 (INNL…SNIN), 662 to 689 (PNSP…SSLN), 752 to 790 (SINN…TTNN), and 797 to 809 (NYKI…NIDN). The segment covering 815 to 832 (NDDDNDDDDDDDVDDNDD) has biased composition (acidic residues). Composition is skewed to low complexity over residues 1079-1149 (HNNN…PSNN) and 1156-1174 (KNNN…NNTN).

This is an uncharacterized protein from Dictyostelium discoideum (Social amoeba).